Here is a 210-residue protein sequence, read N- to C-terminus: Uracil phosphoribosyltransferase (210 aa).

Residues arginine 78, arginine 103, and 130–138 (DPMLATGGS) each bind 5-phospho-alpha-D-ribose 1-diphosphate. Residues isoleucine 193 and 198 to 200 (GDA) contribute to the uracil site. Aspartate 199 is a binding site for 5-phospho-alpha-D-ribose 1-diphosphate.

This sequence belongs to the UPRTase family. The cofactor is Mg(2+).

It carries out the reaction UMP + diphosphate = 5-phospho-alpha-D-ribose 1-diphosphate + uracil. The protein operates within pyrimidine metabolism; UMP biosynthesis via salvage pathway; UMP from uracil: step 1/1. Allosterically activated by GTP. Catalyzes the conversion of uracil and 5-phospho-alpha-D-ribose 1-diphosphate (PRPP) to UMP and diphosphate. The chain is Uracil phosphoribosyltransferase from Laribacter hongkongensis (strain HLHK9).